Here is a 444-residue protein sequence, read N- to C-terminus: Forkhead box protein F2 (444 aa).

The disordered stretch occupies residues 32–98 (PAAAAAAAAA…KKASSGLRRP (67 aa)). Residues 34–75 (AAAAAAAAPETTSSSSSSSSASCASSSSSSNSASAPSAACKS) show a composition bias toward low complexity. Positions 76-87 (AGGGGAGAGSGG) are enriched in gly residues. The fork-head DNA-binding region spans 99–190 (EKPPYSYIAL…EFMFEEGSFR (92 aa)). Disordered regions lie at residues 256 to 323 (GAGA…SPAM) and 338 to 367 (AHWS…SAGL). Over residues 263-274 (AHPHHHHHHHVP) the composition is skewed to basic residues. Positions 293–308 (GPGGVGAAGGGGGGDY) are enriched in gly residues. Low complexity predominate over residues 309-323 (GPDSSSSPVPSSPAM).

In terms of assembly, interacts with the transcription factors TBP and TFIIB. In terms of tissue distribution, lung and placenta. Predominantly expressed in gastrointestinal tract including stomach.

The protein resides in the nucleus. Probable transcription activator for a number of lung-specific genes. Mediates up-regulation of the E3 ligase IRF2BPL and drives ubiquitination and degradation of CTNNB1. The sequence is that of Forkhead box protein F2 (FOXF2) from Homo sapiens (Human).